A 265-amino-acid polypeptide reads, in one-letter code: H-2 class II histocompatibility antigen, A-Q beta chain (265 aa).

Positions methionine 1 to glycine 27 are cleaved as a signal peptide. The beta-1 stretch occupies residues glycine 28 to leucine 122. Topologically, residues glycine 28–methionine 227 are extracellular. 2 disulfide bridges follow: cysteine 42–cysteine 106 and cysteine 145–cysteine 201. A glycan (N-linked (GlcNAc...) asparagine) is linked at asparagine 46. The beta-2 stretch occupies residues glutamate 123–arginine 217. One can recognise an Ig-like C1-type domain in the interval proline 125 to threonine 213. The connecting peptide stretch occupies residues alanine 218–methionine 227. The helical transmembrane segment at leucine 228 to isoleucine 247 threads the bilayer. At arginine 248–glutamine 265 the chain is on the cytoplasmic side.

This sequence belongs to the MHC class II family. Post-translationally, ubiquitinated in immature dendritic cells leading to down-regulation of MHC class II.

The protein localises to the membrane. This Mus musculus (Mouse) protein is H-2 class II histocompatibility antigen, A-Q beta chain (H2-Ab1).